The primary structure comprises 131 residues: Small ribosomal subunit protein uS8 (131 aa).

The protein belongs to the universal ribosomal protein uS8 family. As to quaternary structure, part of the 30S ribosomal subunit. Contacts proteins S5 and S12.

In terms of biological role, one of the primary rRNA binding proteins, it binds directly to 16S rRNA central domain where it helps coordinate assembly of the platform of the 30S subunit. In Zymomonas mobilis subsp. mobilis (strain ATCC 31821 / ZM4 / CP4), this protein is Small ribosomal subunit protein uS8.